The chain runs to 257 residues: MFAPIDPVKIPVVSNPWITMGTLIGYLLFVLKLGPKIMEHRKPFHLNGVIRIYNIFQILYNGLILVLGVHFLFVLKAYQISCIVSLPMDHKYKDRERLICTLYLVNKFVDLVETIFFVLRKKDRQISFLHVFHHFAMAFFGYLYYCFHGYGGVAFPQCLLNTAVHVIMYAYYYLSSISKEVQRSLWWKKYITIAQLVQFAIILLHCTITLAQPNCAVNRPLTYGCGSLSAFFAVIFSQFYYHNYIKPGKKSAKQNKN.

7 helical membrane passes run 10-30, 55-75, 98-118, 135-155, 158-178, 191-211, and 221-241; these read IPVVSNPWITMGTLIGYLLFV, IFQILYNGLILVLGVHFLFVL, LICTLYLVNKFVDLVETIFFV, FAMAFFGYLYYCFHGYGGVAF, CLLNTAVHVIMYAYYYLSSIS, ITIAQLVQFAIILLHCTITLA, and LTYGCGSLSAFFAVIFSQFYY.

The protein belongs to the ELO family. Highly expressed in females. Little or no expression detected in males.

The protein localises to the endoplasmic reticulum membrane. It catalyses the reaction a very-long-chain acyl-CoA + malonyl-CoA + H(+) = a very-long-chain 3-oxoacyl-CoA + CO2 + CoA. The protein operates within lipid metabolism; fatty acid biosynthesis. Functionally, condensing enzyme that elongates saturated and monounsaturated very long chain fatty acids, to yield products up to 30 carbons in length. May also elongate diunsaturated fatty acids. Important for courtship behavior where it probably has a role in female pheromone biosynthesis. The protein is Very long chain fatty acid elongase F of Drosophila melanogaster (Fruit fly).